The chain runs to 288 residues: Proteasome subunit beta (288 aa).

A propeptide spans 1–57 (MTVDGQVGRWPVSAIPAAYMRPGSGSFTEFLAGAEPHLLPGRAGAQPAGAAPAVPHG) (removed in mature form; by autocatalysis). The Nucleophile role is filled by Thr58.

This sequence belongs to the peptidase T1B family. As to quaternary structure, the 20S proteasome core is composed of 14 alpha and 14 beta subunits that assemble into four stacked heptameric rings, resulting in a barrel-shaped structure. The two inner rings, each composed of seven catalytic beta subunits, are sandwiched by two outer rings, each composed of seven alpha subunits. The catalytic chamber with the active sites is on the inside of the barrel. Has a gated structure, the ends of the cylinder being occluded by the N-termini of the alpha-subunits. Is capped by the proteasome-associated ATPase, ARC.

The protein resides in the cytoplasm. The catalysed reaction is Cleavage of peptide bonds with very broad specificity.. Its pathway is protein degradation; proteasomal Pup-dependent pathway. Its activity is regulated as follows. The formation of the proteasomal ATPase ARC-20S proteasome complex, likely via the docking of the C-termini of ARC into the intersubunit pockets in the alpha-rings, may trigger opening of the gate for substrate entry. Interconversion between the open-gate and close-gate conformations leads to a dynamic regulation of the 20S proteasome proteolysis activity. In terms of biological role, component of the proteasome core, a large protease complex with broad specificity involved in protein degradation. The polypeptide is Proteasome subunit beta (Nakamurella multipartita (strain ATCC 700099 / DSM 44233 / CIP 104796 / JCM 9543 / NBRC 105858 / Y-104) (Microsphaera multipartita)).